Here is a 338-residue protein sequence, read N- to C-terminus: Solute carrier family 35 member G6 (338 aa).

Residues 1–25 (MAGSHPYLNPPDSTHPSPPSAPPSL) are disordered. 9 consecutive transmembrane segments (helical) span residues 40–60 (LLVA…LSHM), 67–87 (LPSL…ALLL), 105–125 (YFYA…VQVV), 160–180 (CGLL…LWTL), 190–210 (ALGY…LLVY), 221–241 (TVAF…LFVL), 255–275 (CVGA…YAVT), 281–301 (LVCA…YYML), and 310–330 (IVGA…NLSC). An EamA 1 domain is found at 49 to 174 (LPAGFVGPLS…SILGLIIIVG (126 aa)). The EamA 2 domain occupies 272–325 (YAVTKAHPALVCAVLHSEVVVALILQYYMLHETVAPSDIVGAGVVLGSIAIITA).

The protein belongs to the SLC35G solute transporter family. In terms of tissue distribution, expressed in placenta and testis.

It is found in the membrane. This Homo sapiens (Human) protein is Solute carrier family 35 member G6 (SLC35G6).